A 207-amino-acid chain; its full sequence is Large ribosomal subunit protein uL3 (207 aa).

Residues 119 to 143 (GFQGSIKRNGQHRGPMAHGSRYHRR) are disordered.

Belongs to the universal ribosomal protein uL3 family. As to quaternary structure, part of the 50S ribosomal subunit. Forms a cluster with proteins L14 and L19.

In terms of biological role, one of the primary rRNA binding proteins, it binds directly near the 3'-end of the 23S rRNA, where it nucleates assembly of the 50S subunit. In Ligilactobacillus salivarius (strain UCC118) (Lactobacillus salivarius), this protein is Large ribosomal subunit protein uL3.